The sequence spans 310 residues: Ferredoxin--NADP reductase (310 aa).

Asp26, Gln34, Tyr39, Val78, Phe108, Asp268, and Thr308 together coordinate FAD.

It belongs to the ferredoxin--NADP reductase type 2 family. Homodimer. It depends on FAD as a cofactor.

It carries out the reaction 2 reduced [2Fe-2S]-[ferredoxin] + NADP(+) + H(+) = 2 oxidized [2Fe-2S]-[ferredoxin] + NADPH. In Lactobacillus helveticus (strain DPC 4571), this protein is Ferredoxin--NADP reductase.